Here is a 158-residue protein sequence, read N- to C-terminus: MKKIPNKLLAVSAFLTITTTYAVIPIETFAIEIQQTNTENRSLSANEEQMKKALQDAGLFVKAMNEYSYLLIHNPDVSFEGITINGNTDLPSKIVQDQKNARAHAVTWNTHVKKQLLDTLTGIIEYDTKFENHYETLVEAINTGNGDTLKKGITDLQG.

Positions 1-22 (MKKIPNKLLAVSAFLTITTTYA) are cleaved as a signal peptide. A helical membrane pass occupies residues 120–140 (LTGIIEYDTKFENHYETLVEA).

The protein localises to the cell membrane. This is an uncharacterized protein from Bacillus cereus.